The primary structure comprises 1022 residues: rDNA transcriptional regulator POL5 (1022 aa).

Composition is skewed to acidic residues over residues 706-719 (EEFE…DASE), 728-748 (SESE…EDEA), and 781-802 (DLDQ…ESMD). Disordered regions lie at residues 706–748 (EEFE…EDEA) and 778–805 (GEVD…DDEK). Ser789 bears the Phosphoserine mark.

It belongs to the MYBBP1A family. In terms of assembly, interacts with FRK1.

It localises to the nucleus. The protein resides in the nucleolus. It carries out the reaction DNA(n) + a 2'-deoxyribonucleoside 5'-triphosphate = DNA(n+1) + diphosphate. Stimulated by PCNA and inhibited by aphidicolin. In terms of biological role, plays an important role in the regulation of rRNA transcription. Binds near or at the enhancer region of rRNA repeating units. May have DNA polymerase activity, but it is not required for in vivo function. The protein is rDNA transcriptional regulator POL5 of Saccharomyces cerevisiae (strain ATCC 204508 / S288c) (Baker's yeast).